We begin with the raw amino-acid sequence, 199 residues long: Fe/S biogenesis protein NfuA (199 aa).

Positions 151 and 154 each coordinate [4Fe-4S] cluster.

The protein belongs to the NfuA family. As to quaternary structure, homodimer. Requires [4Fe-4S] cluster as cofactor.

Functionally, involved in iron-sulfur cluster biogenesis. Binds a 4Fe-4S cluster, can transfer this cluster to apoproteins, and thereby intervenes in the maturation of Fe/S proteins. Could also act as a scaffold/chaperone for damaged Fe/S proteins. The protein is Fe/S biogenesis protein NfuA of Xanthomonas euvesicatoria pv. vesicatoria (strain 85-10) (Xanthomonas campestris pv. vesicatoria).